The chain runs to 64 residues: DNA-directed RNA polymerase subunit Rpo10 (64 aa).

The Zn(2+) site is built by C7, C10, C45, and C46.

This sequence belongs to the archaeal Rpo10/eukaryotic RPB10 RNA polymerase subunit family. In terms of assembly, part of the RNA polymerase complex. The cofactor is Zn(2+).

The protein resides in the cytoplasm. The catalysed reaction is RNA(n) + a ribonucleoside 5'-triphosphate = RNA(n+1) + diphosphate. In terms of biological role, DNA-dependent RNA polymerase (RNAP) catalyzes the transcription of DNA into RNA using the four ribonucleoside triphosphates as substrates. The chain is DNA-directed RNA polymerase subunit Rpo10 from Natronomonas pharaonis (strain ATCC 35678 / DSM 2160 / CIP 103997 / JCM 8858 / NBRC 14720 / NCIMB 2260 / Gabara) (Halobacterium pharaonis).